A 271-amino-acid chain; its full sequence is Ribosomal RNA small subunit methyltransferase A (271 aa).

6 residues coordinate S-adenosyl-L-methionine: His11, Leu13, Gly38, Glu58, Asp86, and Asn101.

The protein belongs to the class I-like SAM-binding methyltransferase superfamily. rRNA adenine N(6)-methyltransferase family. RsmA subfamily.

The protein localises to the cytoplasm. The enzyme catalyses adenosine(1518)/adenosine(1519) in 16S rRNA + 4 S-adenosyl-L-methionine = N(6)-dimethyladenosine(1518)/N(6)-dimethyladenosine(1519) in 16S rRNA + 4 S-adenosyl-L-homocysteine + 4 H(+). Its function is as follows. Specifically dimethylates two adjacent adenosines (A1518 and A1519) in the loop of a conserved hairpin near the 3'-end of 16S rRNA in the 30S particle. May play a critical role in biogenesis of 30S subunits. The polypeptide is Ribosomal RNA small subunit methyltransferase A (Helicobacter pylori (strain ATCC 700392 / 26695) (Campylobacter pylori)).